Here is a 370-residue protein sequence, read N- to C-terminus: Sphingolipid delta(4)-desaturase (370 aa).

The next 3 helical transmembrane spans lie at 68–88 (VMGV…TPVF), 92–112 (FLTL…LAIH), and 128–148 (LFAV…FQPY). The Histidine box-1 motif lies at 112–116 (HELSH). Positions 149-153 (HQLHH) match the Histidine box-2 motif. 3 helical membrane passes run 173-193 (FLSS…FYAL), 197-217 (FITQ…QLIF), and 220-240 (VMVT…TFLA). The Histidine box-3 motif lies at 299–303 (HNEHH).

This sequence belongs to the fatty acid desaturase type 1 family. DEGS subfamily.

The protein resides in the membrane. It catalyses the reaction an N-acylsphinganine + 2 Fe(II)-[cytochrome b5] + O2 + 2 H(+) = an N-acylsphing-4-enine + 2 Fe(III)-[cytochrome b5] + 2 H2O. Its pathway is lipid metabolism; sphingolipid metabolism. Functionally, delta(4)-fatty-acid desaturase which introduces a double bond at the 4-position in the long-chain base (LCB) of ceramides. Required for the formation of the monounsaturated sphingoid base (E)-sphing-4-enine during glucosylceramide (GluCer) biosynthesis. This Candida albicans (strain SC5314 / ATCC MYA-2876) (Yeast) protein is Sphingolipid delta(4)-desaturase.